We begin with the raw amino-acid sequence, 320 residues long: ATP-dependent 6-phosphofructokinase (320 aa).

Gly-12 contributes to the ATP binding site. 22 to 26 serves as a coordination point for ADP; the sequence is RGVVR. Residues 73 to 74 and 103 to 106 contribute to the ATP site; these read RF and GDGS. Asp-104 contacts Mg(2+). Residue 126–128 participates in substrate binding; sequence TID. The active-site Proton acceptor is the Asp-128. Arg-155 serves as a coordination point for ADP. Substrate is bound by residues Arg-163 and 170–172; that span reads MGR. ADP-binding positions include 186–188, Lys-212, and 214–216; these read GCE and KKH. Substrate-binding positions include Glu-223, Arg-244, and 250–253; that span reads HIQR.

It belongs to the phosphofructokinase type A (PFKA) family. ATP-dependent PFK group I subfamily. Prokaryotic clade 'B1' sub-subfamily. As to quaternary structure, homotetramer. Mg(2+) is required as a cofactor.

It localises to the cytoplasm. The enzyme catalyses beta-D-fructose 6-phosphate + ATP = beta-D-fructose 1,6-bisphosphate + ADP + H(+). It functions in the pathway carbohydrate degradation; glycolysis; D-glyceraldehyde 3-phosphate and glycerone phosphate from D-glucose: step 3/4. With respect to regulation, allosterically activated by ADP and other diphosphonucleosides, and allosterically inhibited by phosphoenolpyruvate. Functionally, catalyzes the phosphorylation of D-fructose 6-phosphate to fructose 1,6-bisphosphate by ATP, the first committing step of glycolysis. This chain is ATP-dependent 6-phosphofructokinase, found in Vibrio campbellii (strain ATCC BAA-1116).